A 1279-amino-acid chain; its full sequence is ATP-dependent helicase/nuclease subunit A (1279 aa).

Residues 4 to 499 (TKWTDEQRQA…VKLFKNFRSR (496 aa)) form the UvrD-like helicase ATP-binding domain. ATP is bound at residue 25–32 (AGAGAGKT). The UvrD-like helicase C-terminal domain maps to 526-853 (EEALKVGASY…RIMSIHKSKG (328 aa)).

This sequence belongs to the helicase family. AddA subfamily. Heterodimer of AddA and AddB/RexB. Mg(2+) is required as a cofactor.

It catalyses the reaction Couples ATP hydrolysis with the unwinding of duplex DNA by translocating in the 3'-5' direction.. The enzyme catalyses ATP + H2O = ADP + phosphate + H(+). In terms of biological role, the heterodimer acts as both an ATP-dependent DNA helicase and an ATP-dependent, dual-direction single-stranded exonuclease. Recognizes the chi site generating a DNA molecule suitable for the initiation of homologous recombination. The AddA nuclease domain is required for chi fragment generation; this subunit has the helicase and 3' -&gt; 5' nuclease activities. In Clostridium botulinum (strain Okra / Type B1), this protein is ATP-dependent helicase/nuclease subunit A.